The primary structure comprises 737 residues: Alpha-adducin (737 aa).

At Met-1 the chain carries N-acetylmethionine. Residues 1–21 are disordered; the sequence is MNGDSRAAVVTSPPPTTAPHK. Ser-12 is modified (phosphoserine). The residue at position 59 (Ser-59) is a Phosphoserine; by PKA. Ser-64 is subject to Phosphoserine. A Phosphothreonine modification is found at Thr-331. Phosphoserine occurs at positions 334, 353, 355, 358, and 366. Ser-408 is modified (phosphoserine; by PKA). 2 disordered regions span residues 421 to 486 and 576 to 737; these read FASD…SAVP and RREV…KSDS. Ser-427 is modified (phosphoserine). At Thr-429 the chain carries Phosphothreonine. Ser-431 is subject to Phosphoserine. Ser-436 bears the Phosphoserine; by PKA mark. Thr-445 is modified (phosphothreonine; by ROCK2). Phosphoserine occurs at positions 464 and 465. Thr-480 is modified (phosphothreonine; by ROCK2). Ser-481 is modified (phosphoserine; by PKA). The segment covering 576-601 has biased composition (basic and acidic residues); it reads RREVERKQKGSEENLDEAREQKEKSP. 3 positions are modified to phosphoserine: Ser-586, Ser-600, and Ser-613. Residues 602 to 614 are compositionally biased toward pro residues; it reads PDQPAVPHPPPST. Thr-614 is modified (phosphothreonine). Ser-678, Ser-707, Ser-710, and Ser-714 each carry phosphoserine. Residues 687–714 show a composition bias toward low complexity; sequence PVAEEAAPSAVEEGAAADPGSDGSPGKS. Positions 715–737 are enriched in basic residues; that stretch reads PSKKKKKFRTPSFLKKSKKKSDS. Ser-716 bears the Phosphoserine; by PKC mark. Residues 717 to 734 form an interaction with calmodulin region; the sequence is KKKKKFRTPSFLKKSKKK. The residue at position 726 (Ser-726) is a Phosphoserine; by PKA and PKC.

This sequence belongs to the aldolase class II family. Adducin subfamily. In terms of assembly, heterodimer of an alpha and a beta subunit or an alpha and a gamma subunit. Expressed in all tissues. Found in much higher levels in reticulocytes than the beta subunit.

It is found in the cytoplasm. It localises to the cytoskeleton. The protein localises to the cell membrane. In terms of biological role, membrane-cytoskeleton-associated protein that promotes the assembly of the spectrin-actin network. Binds to calmodulin. This chain is Alpha-adducin (ADD1), found in Homo sapiens (Human).